A 62-amino-acid polypeptide reads, in one-letter code: Defensin BmKDfsin3 (62 aa).

The signal sequence occupies residues 1–24; sequence MKTIVILFVLALVFCTLEMGMVEA. 3 disulfide bridges follow: Cys28-Cys49, Cys35-Cys57, and Cys39-Cys59.

This sequence belongs to the invertebrate defensin family. Type 2 subfamily. As to expression, low expression in both venom and non-venom glands (hemolymph).

The protein resides in the secreted. Antibacterial peptide active against Gram-positive bacteria (including S.aureus ATCC25923 (MIC=2.5 uM), M.luteus AB93113 (MIC=2.5 uM), and the antibiotic-resistant S.epidermidis PRSE P1389 (MIC=1.25 uM)), but not against Gram-negative bacteria (including E.coli and P.aeruginosa). Also blocks the currents of Kv1.1/KCNA1 (57% inhibition), Kv1.2/KCNA2 (27.5% inhibition), Kv1.3/KCNA3 (IC(50)=23.4 nM, 84.3% inhibition), KCa3.1/KCNN4/IK (15% inhibition), KCa2.3/KCNN3/SK3 (87.5% inhibition) and Kv11.1/KCNH2/ERG1 (30.4% inhibition) channels (tested at 1 uM). It inhibits potassium channel current by interacting with the pore region. The polypeptide is Defensin BmKDfsin3 (Olivierus martensii (Manchurian scorpion)).